A 441-amino-acid polypeptide reads, in one-letter code: NADH-quinone oxidoreductase subunit D 1 (441 aa).

It belongs to the complex I 49 kDa subunit family. NDH-1 is composed of 14 different subunits. Subunits NuoB, C, D, E, F, and G constitute the peripheral sector of the complex.

It localises to the cell membrane. The catalysed reaction is a quinone + NADH + 5 H(+)(in) = a quinol + NAD(+) + 4 H(+)(out). Its function is as follows. NDH-1 shuttles electrons from NADH, via FMN and iron-sulfur (Fe-S) centers, to quinones in the respiratory chain. The immediate electron acceptor for the enzyme in this species is believed to be a menaquinone. Couples the redox reaction to proton translocation (for every two electrons transferred, four hydrogen ions are translocated across the cytoplasmic membrane), and thus conserves the redox energy in a proton gradient. The chain is NADH-quinone oxidoreductase subunit D 1 from Salinispora tropica (strain ATCC BAA-916 / DSM 44818 / JCM 13857 / NBRC 105044 / CNB-440).